A 245-amino-acid chain; its full sequence is Transcriptional activator protein ExpR (245 aa).

Residues 173–238 enclose the HTH luxR-type domain; the sequence is RSNDKDIFSQ…HAIRLGIELQ (66 aa). A DNA-binding region (H-T-H motif) is located at residues 197–216; that stretch reads YQEIALILDIKTGTVKFHIG.

This sequence belongs to the autoinducer-regulated transcriptional regulatory protein family.

In terms of biological role, functions as an OHLL responsive transcriptional regulator that acts in virulence (soft rot disease) through the activation of genes for plant tissue macerating enzymes. This chain is Transcriptional activator protein ExpR (expR), found in Pectobacterium parmentieri.